The sequence spans 205 residues: ATP phosphoribosyltransferase (205 aa).

This sequence belongs to the ATP phosphoribosyltransferase family. Short subfamily.

Its subcellular location is the cytoplasm. It carries out the reaction 1-(5-phospho-beta-D-ribosyl)-ATP + diphosphate = 5-phospho-alpha-D-ribose 1-diphosphate + ATP. Its pathway is amino-acid biosynthesis; L-histidine biosynthesis; L-histidine from 5-phospho-alpha-D-ribose 1-diphosphate: step 1/9. Its function is as follows. Catalyzes the condensation of ATP and 5-phosphoribose 1-diphosphate to form N'-(5'-phosphoribosyl)-ATP (PR-ATP). Has a crucial role in the pathway because the rate of histidine biosynthesis seems to be controlled primarily by regulation of HisG enzymatic activity. This is ATP phosphoribosyltransferase from Thermococcus gammatolerans (strain DSM 15229 / JCM 11827 / EJ3).